A 361-amino-acid chain; its full sequence is MSFKTLSALALALGAAVQFASAAVPLVQKRATCDDGRTTANAACCILFPILDDIQENLFDGAQCGEEVHESLRLTFHDAIGFSPTLGGGGADGSIIAFDTIETNFPANAGIDEIVSAQKPFVAKHNISAGDFIQFAGAVGVSNCPGGVRIPFFLGRPDAVAASPDHLVPEPFDSVDSILARMGDAGFSPVEVVWLLASHSIAAADKVDPSIPGTPFDSTPGVFDSQFFIETQLKGRLFPGTADNKGEAQSPLQGEIRLQSDHLLARDPQTACEWQSMVNNQPKIQNRFAATMSKMALLGQDKTKLIDCSDVIPTPPALVGAAHLPAGFSLSDVEQACAATPFPALTADPGPVTSVPPVPGS.

Positions 1-22 (MSFKTLSALALALGAAVQFASA) are cleaved as a signal peptide. A propeptide spanning residues 23-30 (AVPLVQKR) is cleaved from the precursor. 4 disulfide bridges follow: cysteine 33–cysteine 45, cysteine 44–cysteine 308, cysteine 64–cysteine 144, and cysteine 272–cysteine 337. Residues glutamate 66 and glutamate 70 each contribute to the Mn(2+) site. Histidine 77 serves as the catalytic Proton acceptor. Ca(2+) contacts are provided by aspartate 78, glycine 90, aspartate 92, and serine 94. N-linked (GlcNAc...) asparagine glycosylation is present at asparagine 126. The active-site Tryptophan radical intermediate is the tryptophan 194. Histidine 199 is a heme b binding site. Serine 200 is a binding site for Ca(2+). Position 203-207 (203-207 (AADKV)) interacts with heme b. A Mn(2+)-binding site is contributed by aspartate 205. Aspartate 217, threonine 219, valine 222, and aspartate 224 together coordinate Ca(2+).

The protein belongs to the peroxidase family. Ligninase subfamily. Heme b serves as cofactor. It depends on Ca(2+) as a cofactor.

Its subcellular location is the secreted. The enzyme catalyses 1-(4-hydroxy-3-methoxyphenyl)-2-(2-methoxyphenoxy)propane-1,3-diol + H2O2 = guaiacol + vanillin + glycolaldehyde + H2O. The catalysed reaction is 2 Mn(2+) + H2O2 + 2 H(+) = 2 Mn(3+) + 2 H2O. Its function is as follows. A versatile ligninolytic peroxidase that combines the substrate specificity characteristics of the two other ligninolytic peroxidases, manganese peroxidase and lignin peroxidase. The protein is Versatile peroxidase VPL2 (vpl2) of Pleurotus eryngii (Boletus of the steppes).